A 453-amino-acid chain; its full sequence is Secreted triacylglycerol lipase LIP2 (453 aa).

The signal sequence occupies residues 1-19 (MKLSLVVLTLISVAAQALA). N-linked (GlcNAc...) asparagine glycosylation is present at Asn-98. Cys-115 and Cys-284 form a disulfide bridge. Catalysis depends on Ser-197, which acts as the Nucleophile. N-linked (GlcNAc...) asparagine glycosylation occurs at Asn-230. Active-site residues include Asp-344 and His-378. Cysteines 360 and 406 form a disulfide.

Belongs to the AB hydrolase superfamily. Lipase family. Class Lip subfamily.

The protein localises to the secreted. It carries out the reaction a triacylglycerol + H2O = a diacylglycerol + a fatty acid + H(+). The enzyme catalyses a monoacylglycerol + H2O = glycerol + a fatty acid + H(+). The catalysed reaction is a diacylglycerol + H2O = a monoacylglycerol + a fatty acid + H(+). Its activity is regulated as follows. The activity is significantly increased in the presence of Triton X-100 and partially inhibited by PMSF but unaffected by univalent and divalent metal ions. Activity is significantly decreased in acetate buffer compared to that in citrate buffer at the same pH. Its function is as follows. Major secreted lipase involved in Dandruff and seborrheic dermatitis (D/SD) probably via lipase-mediated breakdown of sebaceous lipids and release of irritating free fatty acids. Has triacylglycerol lipase activity and is able to hydrolyze triolein, tristearin, trilinolein, tripalmitoylglycerol and trihexadecenoin. Hydrolyze diacylglycerols such as distearin, dilinolein, dipalmitoylglycerol and dipalmitolein. Shows high esterase activity against 4-nitrophenyl palmitate and 1-naphthyl palmitate but not 1-naphthyl acetate, suggesting that it specifically recognizes fatty acids. Mostly converts monoolein to di- and triolein, while free fatty acids are only produced in low amounts. The protein is Secreted triacylglycerol lipase LIP2 of Malassezia globosa (strain ATCC MYA-4612 / CBS 7966) (Dandruff-associated fungus).